Consider the following 459-residue polypeptide: Bifunctional protein GlmU (459 aa).

The pyrophosphorylase stretch occupies residues 1-229 (MTNYAIILAA…FDESLGVNDR (229 aa)). Residues 8-11 (LAAG), Lys22, Gln72, and 77-78 (GT) each bind UDP-N-acetyl-alpha-D-glucosamine. Asp102 contributes to the Mg(2+) binding site. Gly139, Glu154, Asn169, and Asn227 together coordinate UDP-N-acetyl-alpha-D-glucosamine. Asn227 lines the Mg(2+) pocket. A linker region spans residues 230–250 (VALATAESVMRRRINQQHMVN). Residues 251-459 (GVSFVNPHAT…KRLPHHPQNK (209 aa)) are N-acetyltransferase. Positions 332 and 350 each coordinate UDP-N-acetyl-alpha-D-glucosamine. The active-site Proton acceptor is the His362. The UDP-N-acetyl-alpha-D-glucosamine site is built by Tyr365 and Asn376. Residues Ala379, 385 to 386 (NY), Ser404, Ala422, and Arg439 each bind acetyl-CoA.

This sequence in the N-terminal section; belongs to the N-acetylglucosamine-1-phosphate uridyltransferase family. The protein in the C-terminal section; belongs to the transferase hexapeptide repeat family. In terms of assembly, homotrimer. Mg(2+) serves as cofactor.

It is found in the cytoplasm. It catalyses the reaction alpha-D-glucosamine 1-phosphate + acetyl-CoA = N-acetyl-alpha-D-glucosamine 1-phosphate + CoA + H(+). It carries out the reaction N-acetyl-alpha-D-glucosamine 1-phosphate + UTP + H(+) = UDP-N-acetyl-alpha-D-glucosamine + diphosphate. Its pathway is nucleotide-sugar biosynthesis; UDP-N-acetyl-alpha-D-glucosamine biosynthesis; N-acetyl-alpha-D-glucosamine 1-phosphate from alpha-D-glucosamine 6-phosphate (route II): step 2/2. It participates in nucleotide-sugar biosynthesis; UDP-N-acetyl-alpha-D-glucosamine biosynthesis; UDP-N-acetyl-alpha-D-glucosamine from N-acetyl-alpha-D-glucosamine 1-phosphate: step 1/1. The protein operates within bacterial outer membrane biogenesis; LPS lipid A biosynthesis. In terms of biological role, catalyzes the last two sequential reactions in the de novo biosynthetic pathway for UDP-N-acetylglucosamine (UDP-GlcNAc). The C-terminal domain catalyzes the transfer of acetyl group from acetyl coenzyme A to glucosamine-1-phosphate (GlcN-1-P) to produce N-acetylglucosamine-1-phosphate (GlcNAc-1-P), which is converted into UDP-GlcNAc by the transfer of uridine 5-monophosphate (from uridine 5-triphosphate), a reaction catalyzed by the N-terminal domain. This is Bifunctional protein GlmU from Streptococcus sanguinis (strain SK36).